The following is a 308-amino-acid chain: Cytochrome b (308 aa).

The next 4 helical transmembrane spans lie at 1–21, 45–66, 81–101, and 146–166; these read FGSL…LMAM, WLIR…YLHI, WNTG…GYVL, and FFAL…VHLT. 2 residues coordinate heme b: H51 and H65. Residues H150 and H164 each coordinate heme b. H169 contributes to the a ubiquinone binding site. Transmembrane regions (helical) follow at residues 194–214, 256–276, and 288–308; these read IKDI…AMFS, LGGV…PFLH, and LSQL…WVGS.

The protein belongs to the cytochrome b family. In terms of assembly, the cytochrome bc1 complex contains 11 subunits: 3 respiratory subunits (MT-CYB, CYC1 and UQCRFS1), 2 core proteins (UQCRC1 and UQCRC2) and 6 low-molecular weight proteins (UQCRH/QCR6, UQCRB/QCR7, UQCRQ/QCR8, UQCR10/QCR9, UQCR11/QCR10 and a cleavage product of UQCRFS1). This cytochrome bc1 complex then forms a dimer. It depends on heme b as a cofactor.

It localises to the mitochondrion inner membrane. Its function is as follows. Component of the ubiquinol-cytochrome c reductase complex (complex III or cytochrome b-c1 complex) that is part of the mitochondrial respiratory chain. The b-c1 complex mediates electron transfer from ubiquinol to cytochrome c. Contributes to the generation of a proton gradient across the mitochondrial membrane that is then used for ATP synthesis. In Scytalopus magellanicus (Magellanic tapaculo), this protein is Cytochrome b (MT-CYB).